A 357-amino-acid chain; its full sequence is Protein NDRG2 (357 aa).

The tract at residues 1-28 (MAELQEVQITEEKPLLPGQTPEAAKTHS) is disordered. N-acetylalanine is present on A2. T20 carries the phosphothreonine modification. S312 and S314 each carry phosphoserine. T316 is modified (phosphothreonine). Phosphoserine is present on S318. At T320 the chain carries Phosphothreonine. Residues 320-357 (TSAASVDGNRSRSRTLSQSSESGTLSSGPPGHTMEVSC) form a disordered region. S321, S324, and S330 each carry phosphoserine. Residues 333–347 (RTLSQSSESGTLSSG) are compositionally biased toward low complexity. T334 is subject to Phosphothreonine. Residues S336, S338, S339, and S341 each carry the phosphoserine modification. T343 carries the post-translational modification Phosphothreonine. S356 carries the post-translational modification Phosphoserine.

The protein belongs to the NDRG family. Interacts with CTNNB1.

It localises to the cytoplasm. The protein resides in the perinuclear region. Its subcellular location is the cell projection. The protein localises to the growth cone. In terms of biological role, contributes to the regulation of the Wnt signaling pathway. Down-regulates CTNNB1-mediated transcriptional activation of target genes, such as CCND1, and may thereby act as tumor suppressor. May be involved in dendritic cell and neuron differentiation. The sequence is that of Protein NDRG2 (NDRG2) from Pan troglodytes (Chimpanzee).